Reading from the N-terminus, the 122-residue chain is Large ribosomal subunit protein uL14 (122 aa).

The protein belongs to the universal ribosomal protein uL14 family. Part of the 50S ribosomal subunit. Forms a cluster with proteins L3 and L19. In the 70S ribosome, L14 and L19 interact and together make contacts with the 16S rRNA in bridges B5 and B8.

Functionally, binds to 23S rRNA. Forms part of two intersubunit bridges in the 70S ribosome. The chain is Large ribosomal subunit protein uL14 from Mycobacterium ulcerans (strain Agy99).